Consider the following 256-residue polypeptide: EF-hand calcium-binding domain-containing protein 4A (256 aa).

Basic residues predominate over residues methionine 1–methionine 10. Residues methionine 1 to isoleucine 32 are disordered. EF-hand domains lie at lysine 41 to leucine 69 and leucine 71 to valine 106. Residues aspartate 84, serine 86, asparagine 88, tyrosine 90, and glutamate 95 each contribute to the Ca(2+) site. The stretch at isoleucine 190–lysine 235 forms a coiled coil.

This sequence belongs to the EFCAB4 family.

This is EF-hand calcium-binding domain-containing protein 4A (cracr2b) from Xenopus tropicalis (Western clawed frog).